We begin with the raw amino-acid sequence, 168 residues long: MQEAGIGTTTDGIQEKLVAVRRTAKVVKGGRVFGFSALVVAGDGDGKVGFGLGKAREVPSAIQKATENARRNMISVPLYGATLHHAIKATHASSTVLMLPASEGTGVIAGNAMRAIFEVMGVQNVLAKCIGSSNPINVVRATFKGLKQMETPESVAAKRGKAIEEIVE.

The region spanning 13–76 (IQEKLVAVRR…ENARRNMISV (64 aa)) is the S5 DRBM domain.

It belongs to the universal ribosomal protein uS5 family. As to quaternary structure, part of the 30S ribosomal subunit. Contacts proteins S4 and S8.

Its function is as follows. With S4 and S12 plays an important role in translational accuracy. Located at the back of the 30S subunit body where it stabilizes the conformation of the head with respect to the body. The polypeptide is Small ribosomal subunit protein uS5 (Coxiella burnetii (strain RSA 493 / Nine Mile phase I)).